A 196-amino-acid chain; its full sequence is Carnitine operon protein CaiE (196 aa).

The interval 177–196 (RQMEENRPRLQGTTDVMPKR) is disordered.

It belongs to the transferase hexapeptide repeat family.

Its pathway is amine and polyamine metabolism; carnitine metabolism. Functionally, overproduction of CaiE stimulates the activity of CaiB and CaiD. This chain is Carnitine operon protein CaiE, found in Escherichia coli O17:K52:H18 (strain UMN026 / ExPEC).